Reading from the N-terminus, the 358-residue chain is GTPase Obg (358 aa).

Residues methionine 1 to isoleucine 158 enclose the Obg domain. An OBG-type G domain is found at alanine 159 to arginine 355. GTP-binding positions include glycine 165–serine 172, phenylalanine 190–isoleucine 194, aspartate 212–glycine 215, serine 280–aspartate 283, and serine 336–alanine 338. Residues serine 172 and threonine 192 each contribute to the Mg(2+) site.

It belongs to the TRAFAC class OBG-HflX-like GTPase superfamily. OBG GTPase family. In terms of assembly, monomer. Mg(2+) serves as cofactor.

Its subcellular location is the cytoplasm. Functionally, an essential GTPase which binds GTP, GDP and possibly (p)ppGpp with moderate affinity, with high nucleotide exchange rates and a fairly low GTP hydrolysis rate. Plays a role in control of the cell cycle, stress response, ribosome biogenesis and in those bacteria that undergo differentiation, in morphogenesis control. The chain is GTPase Obg from Wolinella succinogenes (strain ATCC 29543 / DSM 1740 / CCUG 13145 / JCM 31913 / LMG 7466 / NCTC 11488 / FDC 602W) (Vibrio succinogenes).